A 385-amino-acid chain; its full sequence is A-type ATP synthase subunit C (385 aa).

This sequence belongs to the V-ATPase V0D/AC39 subunit family. Has multiple subunits with at least A(3), B(3), C, D, E, F, H, I and proteolipid K(x).

Its subcellular location is the cell membrane. Component of the A-type ATP synthase that produces ATP from ADP in the presence of a proton gradient across the membrane. The chain is A-type ATP synthase subunit C from Methanothermobacter thermautotrophicus (strain ATCC 29096 / DSM 1053 / JCM 10044 / NBRC 100330 / Delta H) (Methanobacterium thermoautotrophicum).